Here is a 148-residue protein sequence, read N- to C-terminus: Lysozyme C (148 aa).

Positions 1-18 (MKVLIILGLVLLSVMVQG) are cleaved as a signal peptide. Residues 19 to 148 (KVFERCELAR…VSQYVQGCGV (130 aa)) enclose the C-type lysozyme domain. 4 disulfide bridges follow: cysteine 24–cysteine 146, cysteine 48–cysteine 134, cysteine 83–cysteine 99, and cysteine 95–cysteine 113. Residues glutamate 53 and aspartate 71 contribute to the active site.

Belongs to the glycosyl hydrolase 22 family. As to quaternary structure, monomer.

The catalysed reaction is Hydrolysis of (1-&gt;4)-beta-linkages between N-acetylmuramic acid and N-acetyl-D-glucosamine residues in a peptidoglycan and between N-acetyl-D-glucosamine residues in chitodextrins.. In terms of biological role, lysozymes have primarily a bacteriolytic function; those in tissues and body fluids are associated with the monocyte-macrophage system and enhance the activity of immunoagents. The protein is Lysozyme C (LYZ) of Callithrix jacchus (White-tufted-ear marmoset).